The sequence spans 92 residues: UPF0728 protein (92 aa).

This sequence belongs to the UPF0728 family.

The protein is UPF0728 protein of Branchiostoma floridae (Florida lancelet).